Here is a 196-residue protein sequence, read N- to C-terminus: Internal virion protein gp14 (196 aa).

Belongs to the T7virus internal virion protein gp14 family. As to quaternary structure, interacts with the portal protein. Interacts with gp15.

The protein resides in the virion. It localises to the host cell outer membrane. In terms of biological role, component of the cylindrical core that assembles on the inner surface of the capsid during capsid formation and plays a role in viral DNA ejection into the host cell. The inner core is composed of stacked rings of gp14, gp15 and gp16 proteins. Following binding to the host cell surface, the internal core is disassembled and gp14 is ejected along with gp15 and gp16 into the infected cell. May form a simple channel spanning the outer membrane. The polypeptide is Internal virion protein gp14 (Escherichia phage T7 (Bacteriophage T7)).